We begin with the raw amino-acid sequence, 98 residues long: Aspartyl/glutamyl-tRNA(Asn/Gln) amidotransferase subunit C (98 aa).

This sequence belongs to the GatC family. As to quaternary structure, heterotrimer of A, B and C subunits.

It carries out the reaction L-glutamyl-tRNA(Gln) + L-glutamine + ATP + H2O = L-glutaminyl-tRNA(Gln) + L-glutamate + ADP + phosphate + H(+). The catalysed reaction is L-aspartyl-tRNA(Asn) + L-glutamine + ATP + H2O = L-asparaginyl-tRNA(Asn) + L-glutamate + ADP + phosphate + 2 H(+). In terms of biological role, allows the formation of correctly charged Asn-tRNA(Asn) or Gln-tRNA(Gln) through the transamidation of misacylated Asp-tRNA(Asn) or Glu-tRNA(Gln) in organisms which lack either or both of asparaginyl-tRNA or glutaminyl-tRNA synthetases. The reaction takes place in the presence of glutamine and ATP through an activated phospho-Asp-tRNA(Asn) or phospho-Glu-tRNA(Gln). The polypeptide is Aspartyl/glutamyl-tRNA(Asn/Gln) amidotransferase subunit C (Arthrobacter sp. (strain FB24)).